A 120-amino-acid polypeptide reads, in one-letter code: Large ribosomal subunit protein eL8 (120 aa).

Belongs to the eukaryotic ribosomal protein eL8 family. Part of the 50S ribosomal subunit. Probably part of the RNase P complex.

It is found in the cytoplasm. Multifunctional RNA-binding protein that recognizes the K-turn motif in ribosomal RNA, the RNA component of RNase P, box H/ACA, box C/D and box C'/D' sRNAs. The polypeptide is Large ribosomal subunit protein eL8 (Natronomonas pharaonis (strain ATCC 35678 / DSM 2160 / CIP 103997 / JCM 8858 / NBRC 14720 / NCIMB 2260 / Gabara) (Halobacterium pharaonis)).